We begin with the raw amino-acid sequence, 513 residues long: L-threonine dehydratase biosynthetic IlvA (513 aa).

Position 63 is an N6-(pyridoxal phosphate)lysine (lysine 63). Pyridoxal 5'-phosphate contacts are provided by residues asparagine 90, 189–193, and serine 316; that span reads GGGGL. 2 consecutive ACT-like domains span residues 340–411 and 433–504; these read ALLA…DMSD and RLYT…DVTK.

The protein belongs to the serine/threonine dehydratase family. As to quaternary structure, homotetramer. Pyridoxal 5'-phosphate serves as cofactor.

It carries out the reaction L-threonine = 2-oxobutanoate + NH4(+). It functions in the pathway amino-acid biosynthesis; L-isoleucine biosynthesis; 2-oxobutanoate from L-threonine: step 1/1. Catalyzes the anaerobic formation of alpha-ketobutyrate and ammonia from threonine in a two-step reaction. The first step involved a dehydration of threonine and a production of enamine intermediates (aminocrotonate), which tautomerizes to its imine form (iminobutyrate). Both intermediates are unstable and short-lived. The second step is the nonenzymatic hydrolysis of the enamine/imine intermediates to form 2-ketobutyrate and free ammonia. In the low water environment of the cell, the second step is accelerated by RidA. This Haemophilus influenzae (strain ATCC 51907 / DSM 11121 / KW20 / Rd) protein is L-threonine dehydratase biosynthetic IlvA (ilvA).